The sequence spans 234 residues: Proteasome subunit alpha type-2 (234 aa).

Residue A2 is modified to N-acetylalanine. Residue Y121 is modified to Phosphotyrosine.

The protein belongs to the peptidase T1A family. As to quaternary structure, the 26S proteasome consists of a 20S proteasome core and two 19S regulatory subunits. The 20S proteasome core is a barrel-shaped complex made of 28 subunits that are arranged in four stacked rings. The two outer rings are each formed by seven alpha subunits, and the two inner rings are formed by seven beta subunits. The proteolytic activity is exerted by three beta-subunits PSMB5, PSMB6 and PSMB7.

The protein localises to the cytoplasm. Its subcellular location is the nucleus. In terms of biological role, component of the 20S core proteasome complex involved in the proteolytic degradation of most intracellular proteins. This complex plays numerous essential roles within the cell by associating with different regulatory particles. Associated with two 19S regulatory particles, forms the 26S proteasome and thus participates in the ATP-dependent degradation of ubiquitinated proteins. The 26S proteasome plays a key role in the maintenance of protein homeostasis by removing misfolded or damaged proteins that could impair cellular functions, and by removing proteins whose functions are no longer required. Associated with the PA200 or PA28, the 20S proteasome mediates ubiquitin-independent protein degradation. This type of proteolysis is required in several pathways including spermatogenesis (20S-PA200 complex) or generation of a subset of MHC class I-presented antigenic peptides (20S-PA28 complex). The polypeptide is Proteasome subunit alpha type-2 (psma2) (Xenopus laevis (African clawed frog)).